The sequence spans 504 residues: ATP synthase subunit alpha, chloroplastic (504 aa).

170-177 is an ATP binding site; the sequence is GDRQTGKT.

It belongs to the ATPase alpha/beta chains family. In terms of assembly, F-type ATPases have 2 components, CF(1) - the catalytic core - and CF(0) - the membrane proton channel. CF(1) has five subunits: alpha(3), beta(3), gamma(1), delta(1), epsilon(1). CF(0) has four main subunits: a, b, b' and c.

It localises to the plastid. It is found in the chloroplast thylakoid membrane. It catalyses the reaction ATP + H2O + 4 H(+)(in) = ADP + phosphate + 5 H(+)(out). Its function is as follows. Produces ATP from ADP in the presence of a proton gradient across the membrane. The alpha chain is a regulatory subunit. In Jasminum nudiflorum (Winter jasmine), this protein is ATP synthase subunit alpha, chloroplastic.